The following is a 361-amino-acid chain: Prostaglandin E2 receptor EP2 subtype (361 aa).

Polar residues predominate over residues 1 to 10 (MGSISNNSGS). The tract at residues 1–21 (MGSISNNSGSEDCESREWLPS) is disordered. At 1–23 (MGSISNNSGSEDCESREWLPSGE) the chain is on the extracellular side. An N-linked (GlcNAc...) asparagine glycan is attached at Asn-6. A helical transmembrane segment spans residues 24–47 (SPAISSAMFSAGVLGNLIALALLA). At 48–65 (RRWRGDAGRRAGRGNSIS) the chain is on the cytoplasmic side. The chain crosses the membrane as a helical span at residues 66–91 (LFHVLVTELVFTDLLGTCLISPVVLA). Topologically, residues 92–111 (SYARNQTLMALEPERRACTY) are extracellular. An N-linked (GlcNAc...) asparagine glycan is attached at Asn-96. Cys-109 and Cys-187 are joined by a disulfide. Residues 112–132 (FAFAMTFFSLATMLMLFAMAL) traverse the membrane as a helical segment. Residues 133 to 151 (ERYLSIGRPYFYQRHVTRR) are Cytoplasmic-facing. A helical transmembrane segment spans residues 152–176 (GGLAVLPTIYTVSLLFCSLPLLGYG). Residues 177 to 198 (QYVQYCPGTWCFIRHGRTAYLQ) are Extracellular-facing. A helical transmembrane segment spans residues 199 to 223 (LYATLLLLLIVAVLACNFSVILNLI). The Cytoplasmic portion of the chain corresponds to 224-262 (RMHRRSGRSRCGPSLGSCRDGSGTRRRGERVSVAEETDH). Positions 230-253 (GRSRCGPSLGSCRDGSGTRRRGER) are disordered. A helical transmembrane segment spans residues 263-286 (LILLAIMTITFAICSLPFTIFAYM). Asn-287 is a glycosylation site (N-linked (GlcNAc...) asparagine). At 287–299 (NETSSRREKWDLQ) the chain is on the extracellular side. The helical transmembrane segment at 300-323 (ALRFLSINSIIDPWVFAIFRPPVL) threads the bilayer. The Cytoplasmic portion of the chain corresponds to 324 to 361 (RLMRSVLCCRVSLRAQDATQTSCSIQSNASRLTFVDTS).

The protein belongs to the G-protein coupled receptor 1 family.

It is found in the cell membrane. In terms of biological role, receptor for prostaglandin E2 (PGE2). The activity of this receptor is mediated by G(s) proteins that stimulate adenylate cyclase. The subsequent raise in intracellular cAMP is responsible for the relaxing effect of this receptor on smooth muscle. In Canis lupus familiaris (Dog), this protein is Prostaglandin E2 receptor EP2 subtype (PTGER2).